Here is a 228-residue protein sequence, read N- to C-terminus: Cytidylate kinase (228 aa).

17–25 serves as a coordination point for ATP; that stretch reads GPTASGKGT.

The protein belongs to the cytidylate kinase family. Type 1 subfamily.

Its subcellular location is the cytoplasm. It catalyses the reaction CMP + ATP = CDP + ADP. The enzyme catalyses dCMP + ATP = dCDP + ADP. The polypeptide is Cytidylate kinase (Burkholderia mallei (strain NCTC 10247)).